The primary structure comprises 88 residues: Large ribosomal subunit protein bL27 (88 aa).

A disordered region spans residues 1–25 (MAHKKAGGSSRNGRDSPGQRRGIKR).

The protein belongs to the bacterial ribosomal protein bL27 family.

This chain is Large ribosomal subunit protein bL27 (rpmA), found in Lawsonia intracellularis.